A 249-amino-acid chain; its full sequence is Tetraspanin-18 (249 aa).

Residues 1 to 13 (MEGDCLSCMKYLM) are Cytoplasmic-facing. The chain crosses the membrane as a helical span at residues 14–34 (FVFNFFIFLGGACLLGIGIWV). The Extracellular segment spans residues 35–49 (MVDPTGFREIVAANP). A helical transmembrane segment spans residues 50–70 (LLITGAYILLAMGGLLFLLGF). Over 71–83 (LGCCGAVRENKCL) the chain is Cytoplasmic. Residues 84–104 (LLFFFLFILIIFLAELSAAIL) traverse the membrane as a helical segment. The Extracellular portion of the chain corresponds to 105–223 (AFIFRGNLTR…AFETYVYLAG (119 aa)). N-linked (GlcNAc...) asparagine glycans are attached at residues asparagine 111 and asparagine 129. A helical transmembrane segment spans residues 224 to 244 (ALAIGVLAIELFAMIFAMCLF). At 245–249 (RGIIQ) the chain is on the cytoplasmic side.

This sequence belongs to the tetraspanin (TM4SF) family. As to quaternary structure, interacts with ORAI1; this interaction regulates ORAI1 exit from the endoplasmic (ER), and/or Golgi, and trafficking to the cell surface.

It localises to the membrane. In terms of biological role, plays a role in the cell surface localization of ORAI1 and may participate in the regulation of Ca(2+) signaling and the VWF release in response to inflammatory stimuli. The sequence is that of Tetraspanin-18 from Bos taurus (Bovine).